Consider the following 245-residue polypeptide: Superoxide dismutase [Mn], mitochondrial (245 aa).

A mitochondrion-targeting transit peptide spans 1–32 (MVNLGSIWQNLLASQAPLQSMTGNATTMAGLA). Mn(2+) contacts are provided by His58, His106, Asp196, and His200.

The protein belongs to the iron/manganese superoxide dismutase family. As to quaternary structure, homotetramer. The cofactor is Mn(2+).

The protein localises to the mitochondrion matrix. It carries out the reaction 2 superoxide + 2 H(+) = H2O2 + O2. In terms of biological role, destroys superoxide anion radicals which are normally produced within the cells and which are toxic to biological systems. This Neurospora crassa (strain ATCC 24698 / 74-OR23-1A / CBS 708.71 / DSM 1257 / FGSC 987) protein is Superoxide dismutase [Mn], mitochondrial (sod-2).